The primary structure comprises 455 residues: Squamosa promoter-binding-like protein 16 (455 aa).

An SBP-type zinc finger spans residues 115-192; sequence CPSCAVDGCK…DGHNRRRRKP (78 aa). 8 residues coordinate Zn(2+): C118, C123, C140, H143, C159, C162, H166, and C178. Residues 175-191 carry the Bipartite nuclear localization signal motif; it reads KRSCRKRLDGHNRRRRK. Residues 182–204 form a disordered region; it reads LDGHNRRRRKPQPDPMNSASYLA.

As to expression, expressed in young panicles.

The protein resides in the nucleus. Functionally, trans-acting factor that binds specifically to the consensus nucleotide sequence 5'-TNCGTACAA-3'. May be involved in panicle development. This is Squamosa promoter-binding-like protein 16 (SPL16) from Oryza sativa subsp. japonica (Rice).